A 230-amino-acid chain; its full sequence is Large ribosomal subunit protein uL1 (230 aa).

The protein belongs to the universal ribosomal protein uL1 family. As to quaternary structure, part of the 50S ribosomal subunit.

Its function is as follows. Binds directly to 23S rRNA. The L1 stalk is quite mobile in the ribosome, and is involved in E site tRNA release. Protein L1 is also a translational repressor protein, it controls the translation of the L11 operon by binding to its mRNA. In Bradyrhizobium sp. (strain BTAi1 / ATCC BAA-1182), this protein is Large ribosomal subunit protein uL1.